A 578-amino-acid chain; its full sequence is Triokinase/FMN cyclase (578 aa).

The DhaK domain occupies 9–336 (SVEGCADDAL…IDAETTAKAW (328 aa)). Dihydroxyacetone is bound by residues 56–59 (GSGH), lysine 109, and aspartate 114. Catalysis depends on histidine 221, which acts as the Tele-hemiaminal-histidine intermediate. One can recognise a DhaL domain in the interval 372-571 (KQMALVLDRI…AAAIFRAILE (200 aa)). ATP is bound by residues 401-404 (DGDC), 446-447 (SS), glycine 486, and 494-495 (TM). A phosphoserine mark is found at serine 511 and serine 545. 556-558 (DPG) lines the ATP pocket.

It belongs to the dihydroxyacetone kinase (DAK) family. Homodimer. Interacts with IFIH1 (via the CARD domains), the interaction is inhibited by viral infection. Mg(2+) is required as a cofactor. The cofactor is Mn(2+). Co(2+) serves as cofactor.

It carries out the reaction dihydroxyacetone + ATP = dihydroxyacetone phosphate + ADP + H(+). It catalyses the reaction D-glyceraldehyde + ATP = D-glyceraldehyde 3-phosphate + ADP + H(+). The catalysed reaction is FAD = riboflavin cyclic-4',5'-phosphate + AMP + H(+). With respect to regulation, each activity is inhibited by the substrate(s) of the other. Functionally, catalyzes both the phosphorylation of dihydroxyacetone and of glyceraldehyde, and the splitting of ribonucleoside diphosphate-X compounds among which FAD is the best substrate. Represses IFIH1-mediated cellular antiviral response. The polypeptide is Triokinase/FMN cyclase (Mus musculus (Mouse)).